We begin with the raw amino-acid sequence, 80 residues long: Large ribosomal subunit protein bL31B (80 aa).

This sequence belongs to the bacterial ribosomal protein bL31 family. Type B subfamily. As to quaternary structure, part of the 50S ribosomal subunit.

In Xanthomonas campestris pv. campestris (strain 8004), this protein is Large ribosomal subunit protein bL31B.